The sequence spans 74 residues: Small ribosomal subunit protein bS21 (74 aa).

It belongs to the bacterial ribosomal protein bS21 family.

This Coxiella burnetii (strain Dugway 5J108-111) protein is Small ribosomal subunit protein bS21.